The following is a 387-amino-acid chain: Protein adenylyltransferase VopS (387 aa).

Residues Ile76–Thr77, Leu122–Ser124, Gly353–Gly355, and Arg359 each bind ATP. The region spanning Leu278–Lys387 is the Fido domain.

Its subcellular location is the secreted. It carries out the reaction L-tyrosyl-[protein] + ATP = O-(5'-adenylyl)-L-tyrosyl-[protein] + diphosphate. The catalysed reaction is L-threonyl-[protein] + ATP = 3-O-(5'-adenylyl)-L-threonyl-[protein] + diphosphate. In terms of biological role, adenylyltransferase involved in virulence by mediating the addition of adenosine 5'-monophosphate (AMP) to specific threonine residue of host Rho GTPases RhoA, Rac and Cdc42. The resulting AMPylation prevents the interaction of Rho GTPases with downstream effectors, thereby inhibiting actin assembly in infected cells. The sequence is that of Protein adenylyltransferase VopS (vopS) from Vibrio parahaemolyticus serotype O3:K6 (strain RIMD 2210633).